The chain runs to 283 residues: Bifunctional protein FolD (283 aa).

Residues 166-168 (GAS), Ser191, and Ile232 contribute to the NADP(+) site.

This sequence belongs to the tetrahydrofolate dehydrogenase/cyclohydrolase family. As to quaternary structure, homodimer.

It catalyses the reaction (6R)-5,10-methylene-5,6,7,8-tetrahydrofolate + NADP(+) = (6R)-5,10-methenyltetrahydrofolate + NADPH. It carries out the reaction (6R)-5,10-methenyltetrahydrofolate + H2O = (6R)-10-formyltetrahydrofolate + H(+). Its pathway is one-carbon metabolism; tetrahydrofolate interconversion. Functionally, catalyzes the oxidation of 5,10-methylenetetrahydrofolate to 5,10-methenyltetrahydrofolate and then the hydrolysis of 5,10-methenyltetrahydrofolate to 10-formyltetrahydrofolate. The chain is Bifunctional protein FolD from Chromobacterium violaceum (strain ATCC 12472 / DSM 30191 / JCM 1249 / CCUG 213 / NBRC 12614 / NCIMB 9131 / NCTC 9757 / MK).